The primary structure comprises 66 residues: FMRFamide-like neuropeptide 21 (66 aa).

The signal sequence occupies residues M1–A16.

Belongs to the FARP (FMRFamide related peptide) family. In terms of processing, may be processed by convertase egl-3. Expressed in the ADL, ASE and ASH sensory neurons, the URA motor neurons and the MC, M2 and M4 pharyngeal neurons.

Its subcellular location is the secreted. Functionally, FMRFamide-like neuropeptide. Involved in modulating locomotion quiescence during the sleep-like state called lethargus which occurs during molting between larval and adult stages, acting via the G-protein coupled receptor npr-1. Plays a role in modulating social and feeding behavior. Ligand to G-protein coupled receptor npr-1. The sequence is that of FMRFamide-like neuropeptide 21 from Caenorhabditis elegans.